Consider the following 149-residue polypeptide: MVFLTAQLWLRNRVTDRYFRIQEVLKHARHFRGRKNRCYRLAVRTVIRAFVKCTKARYLKKKNMRTLWINRITAASQEHGLKYPALIGNLVKCQVELNRKVLADLAIYEPKTFKSLAALASRRRHEGFAAALGDGKEPEGIFSRVVQYH.

The N-terminal 9 residues, 1–9 (MVFLTAQLW), are a transit peptide targeting the mitochondrion.

Belongs to the bacterial ribosomal protein bL20 family. Component of the mitochondrial large ribosomal subunit (mt-LSU). Mature mammalian 55S mitochondrial ribosomes consist of a small (28S) and a large (39S) subunit. The 28S small subunit contains a 12S ribosomal RNA (12S mt-rRNA) and 30 different proteins. The 39S large subunit contains a 16S rRNA (16S mt-rRNA), a copy of mitochondrial valine transfer RNA (mt-tRNA(Val)), which plays an integral structural role, and 52 different proteins. Interacts with OXA1L.

The protein resides in the mitochondrion. This chain is Large ribosomal subunit protein bL20m (MRPL20), found in Homo sapiens (Human).